We begin with the raw amino-acid sequence, 692 residues long: Putative ESX-1 scaffolding and assembly protein SaeA (692 aa).

Positions Met-1–Pro-21 are enriched in basic and acidic residues. Disordered stretches follow at residues Met-1–Leu-23 and Pro-87–Phe-134. The segment covering Ala-89 to Gly-107 has biased composition (pro residues).

Its function is as follows. May be involved in assembly of the ESX-1 / type VII specialized secretion system (T7SS), which exports several proteins including EsxA and EsxB. Involved in DNA conjugation in recipient (MKD8) but not donor (mc(2)155) strain. In Mycolicibacterium smegmatis (strain MKD8) (Mycobacterium smegmatis), this protein is Putative ESX-1 scaffolding and assembly protein SaeA (saeA).